The chain runs to 245 residues: tRNA (guanine-N(1)-)-methyltransferase (245 aa).

S-adenosyl-L-methionine is bound by residues Gly-108 and 127–132 (IGDYVL).

The protein belongs to the RNA methyltransferase TrmD family. In terms of assembly, homodimer.

The protein localises to the cytoplasm. It carries out the reaction guanosine(37) in tRNA + S-adenosyl-L-methionine = N(1)-methylguanosine(37) in tRNA + S-adenosyl-L-homocysteine + H(+). In terms of biological role, specifically methylates guanosine-37 in various tRNAs. This chain is tRNA (guanine-N(1)-)-methyltransferase, found in Lactobacillus delbrueckii subsp. bulgaricus (strain ATCC 11842 / DSM 20081 / BCRC 10696 / JCM 1002 / NBRC 13953 / NCIMB 11778 / NCTC 12712 / WDCM 00102 / Lb 14).